The primary structure comprises 571 residues: Glutamate--tRNA ligase (571 aa).

A compositionally biased stretch (basic and acidic residues) spans 75-88 (GGPREDVARDKEGL). Residues 75–98 (GGPREDVARDKEGLKPLPGAEPGN) form a disordered region. The 'HIGH' region motif lies at 105–115 (PNPSGPLHIGH).

Belongs to the class-I aminoacyl-tRNA synthetase family. Glutamate--tRNA ligase type 2 subfamily.

It localises to the cytoplasm. It carries out the reaction tRNA(Glu) + L-glutamate + ATP = L-glutamyl-tRNA(Glu) + AMP + diphosphate. Catalyzes the attachment of glutamate to tRNA(Glu) in a two-step reaction: glutamate is first activated by ATP to form Glu-AMP and then transferred to the acceptor end of tRNA(Glu). The protein is Glutamate--tRNA ligase of Methanopyrus kandleri (strain AV19 / DSM 6324 / JCM 9639 / NBRC 100938).